We begin with the raw amino-acid sequence, 121 residues long: Small ribosomal subunit protein uS13 (121 aa).

The segment at Gly-94 to Lys-121 is disordered. The span at Ala-106 to Lys-121 shows a compositional bias: basic residues.

It belongs to the universal ribosomal protein uS13 family. Part of the 30S ribosomal subunit. Forms a loose heterodimer with protein S19. Forms two bridges to the 50S subunit in the 70S ribosome.

Located at the top of the head of the 30S subunit, it contacts several helices of the 16S rRNA. In the 70S ribosome it contacts the 23S rRNA (bridge B1a) and protein L5 of the 50S subunit (bridge B1b), connecting the 2 subunits; these bridges are implicated in subunit movement. Contacts the tRNAs in the A and P-sites. This is Small ribosomal subunit protein uS13 from Anoxybacillus flavithermus (strain DSM 21510 / WK1).